A 321-amino-acid polypeptide reads, in one-letter code: ATP phosphoribosyltransferase regulatory subunit (321 aa).

This sequence belongs to the class-II aminoacyl-tRNA synthetase family. HisZ subfamily. In terms of assembly, heteromultimer composed of HisG and HisZ subunits.

Its subcellular location is the cytoplasm. It functions in the pathway amino-acid biosynthesis; L-histidine biosynthesis; L-histidine from 5-phospho-alpha-D-ribose 1-diphosphate: step 1/9. Its function is as follows. Required for the first step of histidine biosynthesis. May allow the feedback regulation of ATP phosphoribosyltransferase activity by histidine. In Thiobacillus denitrificans (strain ATCC 25259 / T1), this protein is ATP phosphoribosyltransferase regulatory subunit.